A 128-amino-acid polypeptide reads, in one-letter code: Large ribosomal subunit protein bL12 (128 aa).

Belongs to the bacterial ribosomal protein bL12 family. As to quaternary structure, homodimer. Part of the ribosomal stalk of the 50S ribosomal subunit. Forms a multimeric L10(L12)X complex, where L10 forms an elongated spine to which 2 to 4 L12 dimers bind in a sequential fashion. Binds GTP-bound translation factors.

In terms of biological role, forms part of the ribosomal stalk which helps the ribosome interact with GTP-bound translation factors. Is thus essential for accurate translation. This Kineococcus radiotolerans (strain ATCC BAA-149 / DSM 14245 / SRS30216) protein is Large ribosomal subunit protein bL12.